The primary structure comprises 431 residues: MAVDVLLGLQWGDEGKGKVVDVLAPKYDYVARFQGGPNAGHTLIFDGHKVVLHQIPSGVFRSNITNLIGNGLVLDVIALFEKEIDKLEAFKLNLNKNLFISKKAALILPSHVELDKAYEAAKGAGKIGSTLRGIGPTYTDKVSRHGLRVGDILSPDFMDKYNKLVDQHKQILDFHKHDYSEMKEREDLFFKYIDRLRKMNLVDSEYFINDAIQSKKTILAEGAQGSLLDIDFGSYPFVTSSSTMVAGACTGLGIAPKHIGNVFGIFKAYCTRVGSGPFPTELHDAVGEEIRKQGNEFGSTTGRPRRCGWLDLPALKYACMINGVSHLLMMKADVLNAFEELQVCTHYKLGNGDIVDTLPYDMCTNDLTPVYKTLKGWNQDLSNCETFDSLPQALLDYSAFIEAELGLPITLISIGPDRKETLIKDFSFITA.

GTP-binding positions include Gly-12–Lys-18 and Gly-40–Thr-42. Catalysis depends on Asp-13, which acts as the Proton acceptor. Mg(2+) is bound by residues Asp-13 and Gly-40. IMP contacts are provided by residues Asp-13–Lys-16, Asn-38–His-41, Thr-130, Arg-144, Gln-224, Thr-239, and Arg-303. His-41 (proton donor) is an active-site residue. Ser-299 to Arg-305 serves as a coordination point for substrate. Residues Arg-305, Lys-331–Asp-333, and Ser-413–Gly-415 each bind GTP.

The protein belongs to the adenylosuccinate synthetase family. Homodimer. Mg(2+) is required as a cofactor.

The protein localises to the cytoplasm. The enzyme catalyses IMP + L-aspartate + GTP = N(6)-(1,2-dicarboxyethyl)-AMP + GDP + phosphate + 2 H(+). It participates in purine metabolism; AMP biosynthesis via de novo pathway; AMP from IMP: step 1/2. In terms of biological role, plays an important role in the de novo pathway of purine nucleotide biosynthesis. Catalyzes the first committed step in the biosynthesis of AMP from IMP. This is Adenylosuccinate synthetase from Cytophaga hutchinsonii (strain ATCC 33406 / DSM 1761 / CIP 103989 / NBRC 15051 / NCIMB 9469 / D465).